The primary structure comprises 221 residues: UPF0758 protein YicR (221 aa).

Residues 99-221 form the MPN domain; sequence ALLSPEMTLE…YVSFAERGWI (123 aa). Zn(2+) is bound by residues H170, H172, and D183. Positions 170–183 match the JAMM motif motif; it reads HNHPSGCAEPSKAD.

This sequence belongs to the UPF0758 family. YicR subfamily.

The chain is UPF0758 protein YicR from Salmonella arizonae (strain ATCC BAA-731 / CDC346-86 / RSK2980).